Here is a 1905-residue protein sequence, read N- to C-terminus: Tudor domain-containing 6-like (1905 aa).

Tudor domains are found at residues 1 to 30 (MVEV…LREM), 215 to 279 (YERG…LFDL), and 435 to 491 (SVTP…AYEL). Residues 564–795 (SRAEGSFGNS…SKLTPPLSKL (232 aa)) form a disordered region. Basic and acidic residues predominate over residues 573–591 (SEKRNQLNDLDRGGRKETT). A compositionally biased stretch (polar residues) spans 592 to 602 (SKFQPYSQGSK). Over residues 622–631 (FQTKEREQFE) the composition is skewed to basic and acidic residues. 2 stretches are compositionally biased toward polar residues: residues 651-660 (VQKNMSQSGF) and 687-704 (LYSQ…SSYS). The span at 715-726 (RSKERQVSEHKQ) shows a compositional bias: basic and acidic residues. Composition is skewed to polar residues over residues 746-766 (KASQ…GSDQ) and 774-787 (NASQ…QESK). 2 Tudor domains span residues 853–910 (YVNL…LLSI) and 1060–1118 (EIEV…IAAI). 4 disordered regions span residues 1213–1245 (IEDN…TPAV), 1449–1599 (EDFE…TETE), 1655–1682 (VEDL…SGPV), and 1827–1905 (ESPA…APSV). Acidic residues-rich tracts occupy residues 1491 to 1500 (EAEGLEDQDQ) and 1522 to 1535 (EQAE…DPGT). Over residues 1553–1588 (SQEHKDFPEQEEDRVAEHKNDISEPDLQSKEQKEDL) the composition is skewed to basic and acidic residues. Residues 1663-1673 (QESQICISGSD) show a composition bias toward polar residues. Over residues 1876-1887 (FEPETDDMEQME) the composition is skewed to acidic residues.

Interacts with FRGY2 (a component of messenger ribonucleoprotein (mRNP) particle) during germ cell development. Expressed in testis.

The protein localises to the cytoplasm. Its function is as follows. Tudor domain-containing protein involved in germ cell development, more specifically the formation of chromatoid body (during spermiogenesis), Balbiani body (during oogenesis), germ plasm (upon fertilization), and for proper miRNA expression and spliceosome maturation. Component of cytoplasmic mRNP particle through interaction with FRGY2, and binds to maternal mRNA related to cell cycle (RCC1, RHAMM, INCENP-A, MAD2L1, HELLS) and a germ plasm specific mRNA (Dead end/Dnd1), it is proposed a role in translational activation of the maternal mRNAs repressed in mRNP particle. In Xenopus laevis (African clawed frog), this protein is Tudor domain-containing 6-like.